The primary structure comprises 202 residues: Na(+)-translocating NADH-quinone reductase subunit E (202 aa).

The next 6 helical transmembrane spans lie at 11–31, 35–55, 81–101, 114–134, 144–164, and 180–200; these read AVFV…FIAI, VETA…TVPA, FLGL…LEML, GVFL…LFMV, TVYG…LAGI, and LGIT…FSGV.

This sequence belongs to the NqrDE/RnfAE family. In terms of assembly, composed of six subunits; NqrA, NqrB, NqrC, NqrD, NqrE and NqrF.

It is found in the cell inner membrane. It carries out the reaction a ubiquinone + n Na(+)(in) + NADH + H(+) = a ubiquinol + n Na(+)(out) + NAD(+). In terms of biological role, NQR complex catalyzes the reduction of ubiquinone-1 to ubiquinol by two successive reactions, coupled with the transport of Na(+) ions from the cytoplasm to the periplasm. NqrA to NqrE are probably involved in the second step, the conversion of ubisemiquinone to ubiquinol. In Pseudomonas aeruginosa (strain LESB58), this protein is Na(+)-translocating NADH-quinone reductase subunit E.